The following is an 88-amino-acid chain: uncharacterized protein (88 aa).

Residues 1–24 (MLPRSCKDFYETLRTAVLCGQACA) form the signal peptide.

It to Rhizobium NGR234A y4oL.

This is an uncharacterized protein from Sinorhizobium fredii (strain NBRC 101917 / NGR234).